A 259-amino-acid chain; its full sequence is Leucine-rich repeat-containing protein 61 (259 aa).

LRR repeat units lie at residues 32–53, 54–75, 76–97, and 98–119; these read SILL…GECL, GLEW…ASLR, QLAV…ATCE, and NLQS…QCLA. The 41-residue stretch at 138-178 folds into the LRRCT domain; that stretch reads NPLCANPSYWAAVRELLPGLKVIDGERVIGRGSEFYQLCRD.

This is Leucine-rich repeat-containing protein 61 (LRRC61) from Homo sapiens (Human).